The chain runs to 495 residues: MKSILKAMALSLTTSIALATILLFVYKFATRSKSTKKSLPEPWRLPIIGHMHHLIGTTPHRGVRDLARKYGSLMHLQLGEVPTIVVSSPKWAKEILTTYDISFANRPETLTGEIVLYHNTDVVLAPYGEYWRQLRKICTLELLSVKKVKSFQSLREEECWNLVQEIKASGSGRPVNLSENVFKLIATILSRAAFGKGIKDQKELTEIVKEILRQTGGFDVADIFPSKKFLHHLSGKRARLTSLRKKIDNLIDNLVAEHTVNTSSKTNETLLDVLLRLKDSAEFPLTSDNIKAIILDMFGAGTDTSSSTIEWAISELIKCPKAMEKVQAELRKALNGKEKIHEEDIQELSYLNMVIKETLRLHPPLPLVLPRECRQPVNLAGYNIPNKTKLIVNVFAINRDPEYWKDAEAFIPERFENSSATVMGAEYEYLPFGAGRRMCPGAALGLANVQLPLANILYHFNWKLPNGVSYDQIDMTESSGATMQRKTELLLVPSF.

Over 1–6 (MKSILK) the chain is Cytoplasmic. Residues 7-29 (AMALSLTTSIALATILLFVYKFA) form a helical; Signal-anchor for type II membrane protein membrane-spanning segment. Topologically, residues 30-495 (TRSKSTKKSL…KTELLLVPSF (466 aa)) are lumenal. N-linked (GlcNAc...) asparagine glycans are attached at residues Asn-176, Asn-261, Asn-267, Asn-386, and Asn-417. A heme-binding site is contributed by Cys-439.

It belongs to the cytochrome P450 family. The cofactor is heme. As to expression, highly expressed both in apical and sub-apical cells of glandular secretory trichomes. Detected in flower buds, leaves and roots. Also present in non-glandular trichome cells.

The protein resides in the endoplasmic reticulum membrane. It carries out the reaction (+)-amorpha-4,11-diene + 3 reduced [NADPH--hemoprotein reductase] + 3 O2 = (+)-artemisinate + 3 oxidized [NADPH--hemoprotein reductase] + 4 H2O + 4 H(+). Its pathway is sesquiterpene biosynthesis. Its function is as follows. Involved in the biosynthesis of the antimalarial endoperoxide artemisinin. Catalyzes three consecutive oxidations of amorpha-4,11-diene to produce artemisinic acid, with artemisinic alcohol and artemisinic aldehyde as intermediates products, but is unable to oxidize germacrene A. No activity with limonene, alpha-pinene, beta-pinene, pinocarveol, (-)-alloisolongifolene, caryophyllene, (-)-alpha-gurjunene, (+)-gamma-gurjunene, (+)-ledene, (+)-beta-selinene and (+)-valencene as substrates. In Artemisia annua (Sweet wormwood), this protein is Amorpha-4,11-diene 12-monooxygenase.